A 156-amino-acid polypeptide reads, in one-letter code: Small ribosomal subunit protein uS7c (156 aa).

This sequence belongs to the universal ribosomal protein uS7 family. Part of the 30S ribosomal subunit.

Its subcellular location is the plastid. The protein resides in the chloroplast. Functionally, one of the primary rRNA binding proteins, it binds directly to 16S rRNA where it nucleates assembly of the head domain of the 30S subunit. The polypeptide is Small ribosomal subunit protein uS7c (rps7) (Chlorokybus atmophyticus (Soil alga)).